A 227-amino-acid chain; its full sequence is NAD(P)H-quinone oxidoreductase subunit K, chloroplastic (227 aa).

4 residues coordinate [4Fe-4S] cluster: C43, C44, C108, and C139.

Belongs to the complex I 20 kDa subunit family. As to quaternary structure, NDH is composed of at least 16 different subunits, 5 of which are encoded in the nucleus. [4Fe-4S] cluster serves as cofactor.

The protein resides in the plastid. It localises to the chloroplast thylakoid membrane. It catalyses the reaction a plastoquinone + NADH + (n+1) H(+)(in) = a plastoquinol + NAD(+) + n H(+)(out). It carries out the reaction a plastoquinone + NADPH + (n+1) H(+)(in) = a plastoquinol + NADP(+) + n H(+)(out). NDH shuttles electrons from NAD(P)H:plastoquinone, via FMN and iron-sulfur (Fe-S) centers, to quinones in the photosynthetic chain and possibly in a chloroplast respiratory chain. The immediate electron acceptor for the enzyme in this species is believed to be plastoquinone. Couples the redox reaction to proton translocation, and thus conserves the redox energy in a proton gradient. In Pelargonium hortorum (Common geranium), this protein is NAD(P)H-quinone oxidoreductase subunit K, chloroplastic.